We begin with the raw amino-acid sequence, 273 residues long: Peroxiredoxin-4 (273 aa).

The signal sequence occupies residues 1-40 (METWSKLLDGTTPSRRWRKLVLLLPPLLLFLLQTEALQGL). The Thioredoxin domain maps to 81–239 (AKISKPAPYW…TLRLVQAFQY (159 aa)). C126 functions as the Cysteine sulfenic acid (-SOH) intermediate in the catalytic mechanism.

The protein belongs to the peroxiredoxin family. AhpC/Prx1 subfamily. Homodimer; disulfide-linked, upon oxidation. 5 homodimers assemble to form a ring-like decamer. Post-translationally, the enzyme can be inactivated by further oxidation of the cysteine sulfenic acid (C(P)-SOH) to sulphinic acid (C(P)-SO2H) and sulphonic acid (C(P)-SO3H) instead of its condensation to a disulfide bond.

It is found in the cytoplasm. Its subcellular location is the endoplasmic reticulum. The protein resides in the secreted. The catalysed reaction is a hydroperoxide + [thioredoxin]-dithiol = an alcohol + [thioredoxin]-disulfide + H2O. Thiol-specific peroxidase that catalyzes the reduction of hydrogen peroxide and organic hydroperoxides to water and alcohols, respectively. Plays a role in cell protection against oxidative stress by detoxifying peroxides and as sensor of hydrogen peroxide-mediated signaling events. Regulates the activation of NF-kappa-B in the cytosol by a modulation of I-kappa-B-alpha phosphorylation. This is Peroxiredoxin-4 (Prdx4) from Rattus norvegicus (Rat).